The sequence spans 384 residues: Succinyl-diaminopimelate desuccinylase (384 aa).

Residue histidine 71 coordinates Zn(2+). Aspartate 73 is an active-site residue. Zn(2+) is bound at residue aspartate 104. Catalysis depends on glutamate 138, which acts as the Proton acceptor. Zn(2+)-binding residues include glutamate 139, glutamate 167, and histidine 357.

This sequence belongs to the peptidase M20A family. DapE subfamily. Homodimer. The cofactor is Zn(2+). Co(2+) is required as a cofactor.

The enzyme catalyses N-succinyl-(2S,6S)-2,6-diaminopimelate + H2O = (2S,6S)-2,6-diaminopimelate + succinate. Its pathway is amino-acid biosynthesis; L-lysine biosynthesis via DAP pathway; LL-2,6-diaminopimelate from (S)-tetrahydrodipicolinate (succinylase route): step 3/3. In terms of biological role, catalyzes the hydrolysis of N-succinyl-L,L-diaminopimelic acid (SDAP), forming succinate and LL-2,6-diaminopimelate (DAP), an intermediate involved in the bacterial biosynthesis of lysine and meso-diaminopimelic acid, an essential component of bacterial cell walls. The polypeptide is Succinyl-diaminopimelate desuccinylase (Blochmanniella floridana).